We begin with the raw amino-acid sequence, 271 residues long: Autophagy-related protein 27 (271 aa).

An N-terminal signal peptide occupies residues 1–19 (MVSKTWICGFISIITVVQA). An MRH domain is found at 20-166 (LSCEKHDVLK…TLKGPSGCLK (147 aa)). Residues 20-197 (LSCEKHDVLK…KKPAKKAGGT (178 aa)) lie on the Lumenal side of the membrane. 3 disulfides stabilise this stretch: Cys-22/Cys-60, Cys-71/Cys-78, and Cys-135/Cys-164. A disordered region spans residues 161–190 (PSGCLKSKDDDKKNGDGDNGKDGDNEGKKP). Residues 166 to 189 (KSKDDDKKNGDGDNGKDGDNEGKK) show a composition bias toward basic and acidic residues. The chain crosses the membrane as a helical span at residues 198 to 218 (LWFTWLFLYALLFTLIYLMVV). Topologically, residues 219 to 271 (SFLNTRGGSFQDFRAEFIQRSTQFLTSLPEFCREVVSRILGRSTAQRGGYSAV) are cytoplasmic.

Belongs to the ATG27 family. In terms of assembly, forms a complex with ATG9 and ATG23.

The protein resides in the cytoplasmic vesicle membrane. The protein localises to the golgi apparatus membrane. It localises to the mitochondrion membrane. Its subcellular location is the preautophagosomal structure membrane. Effector of VPS34 phosphatidylinositol 3-phosphate kinase signaling. Regulates the cytoplasm to vacuole transport (Cvt) vesicle formation. Plays a role in ATG protein retrieval from the pre-autophagosomal structure (PAS) and is especially required for autophagy-dependent cycling of ATG9. The sequence is that of Autophagy-related protein 27 (ATG27) from Saccharomyces cerevisiae (strain YJM789) (Baker's yeast).